The chain runs to 376 residues: 26S proteasome non-ATPase regulatory subunit 4 (376 aa).

A VWFA domain is found at 5–188 (STMVCVDNSE…LADALISSPI (184 aa)). Residue K122 forms a Glycyl lysine isopeptide (Lys-Gly) (interchain with G-Cter in SUMO2) linkage. Positions 197–262 (LGLGASDFEF…TEDSDDALLK (66 aa)) are interaction with UBQLN1. Residues 211–230 (SADPELALALRVSMEEQRQR) form the UIM 1 domain. A compositionally biased stretch (basic and acidic residues) spans 224-237 (MEEQRQRQEEEARR). Positions 224-257 (MEEQRQRQEEEARRAAAASAAEAGIATPGTEDSD) are disordered. Residues T250 and T253 each carry the phosphothreonine modification. Residues S256 and A259 each carry the phosphoserine modification. Residues 282-301 (TEEEQIAYAMQMSLQGTEFS) enclose the UIM 2 domain. The disordered stretch occupies residues 355-376 (MGALASQATKDGKNDKKEEEKK). A Phosphoserine modification is found at S360. The span at 364–376 (KDGKNDKKEEEKK) shows a compositional bias: basic and acidic residues.

Belongs to the proteasome subunit S5A family. As to quaternary structure, component of the 19S proteasome regulatory particle complex. The 26S proteasome consists of a 20S core particle (CP) and two 19S regulatory subunits (RP). The regulatory particle is made of a lid composed of 9 subunits, a base containing 6 ATPases and few additional components including PSMD4. Interacts with NUB1. Interacts with SQSTM1. Interacts with UBQLN4. Interacts with UBE3A. Interacts with UBQLN1 (via ubiquitin-like domain). Interacts with DDI2. In terms of tissue distribution, isoform Rpn10A is ubiquitous whereas isoform Rpn10E is mostly expressed in the embryonic brain.

Functionally, component of the 26S proteasome, a multiprotein complex involved in the ATP-dependent degradation of ubiquitinated proteins. This complex plays a key role in the maintenance of protein homeostasis by removing misfolded or damaged proteins, which could impair cellular functions, and by removing proteins whose functions are no longer required. Therefore, the proteasome participates in numerous cellular processes, including cell cycle progression, apoptosis, or DNA damage repair. PSMD4 acts as an ubiquitin receptor subunit through ubiquitin-interacting motifs and selects ubiquitin-conjugates for destruction. Displays a preferred selectivity for longer polyubiquitin chains. In Mus musculus (Mouse), this protein is 26S proteasome non-ATPase regulatory subunit 4 (Psmd4).